Here is a 415-residue protein sequence, read N- to C-terminus: MAEFIRSDILGTTFETTSRYANLQPVGLGTAGVVCSAYDLISEQVVAIKKMMKPFHSTSVAKRTYREVKLLRHLRHDNLINMSDIFISPLEDVYLVTELLGTDLHRLLNGKPLESKFAQYFTYQILRGLKYIHSAGVIHRDLKPGNLLINENCDLKICDFGLARVQEPQMTGYVSTRYYRAPEIMLTWQRYGSKVDLWSVGCILAEMLLGRPLFPGTDHINQFWLITDLLGNPPDEVIDRITTNNTRRVVKSMAKRNPRPLKEILPAAEDAALNLLDNLLVFDPDRRISAEQGLMHPWMAPYHDPTDEPVATEQFDWSFNDADLPLDTWKIMIYSEVLDFFQLTTNAEPSGEQSQNQSQSQSQAFTSSQDLQLASMLNLGEGELLPDFAATIDPNKFGSVDYLMDGQSLDPNSFS.

The Protein kinase domain occupies 20-299 (YANLQPVGLG…AEQGLMHPWM (280 aa)). ATP-binding positions include 26–34 (VGLGTAGVV) and lysine 49. The active-site Proton acceptor is the aspartate 141. At threonine 171 the chain carries Phosphothreonine. The short motif at 171–173 (TGY) is the TXY element. Tyrosine 173 is modified (phosphotyrosine).

This sequence belongs to the protein kinase superfamily. Ser/Thr protein kinase family. MAP kinase subfamily. HOG1 sub-subfamily. The cofactor is Mg(2+). In terms of processing, dually phosphorylated on Thr-171 and Tyr-173, which activates the enzyme.

The enzyme catalyses L-seryl-[protein] + ATP = O-phospho-L-seryl-[protein] + ADP + H(+). The catalysed reaction is L-threonyl-[protein] + ATP = O-phospho-L-threonyl-[protein] + ADP + H(+). Activated by tyrosine and threonine phosphorylation. Mitogen-activated protein kinase required for growth on media where sorbitol or mannitol is the sole carbon source. This chain is Mitogen-activated protein kinase mpkC (mpkC), found in Emericella nidulans (strain FGSC A4 / ATCC 38163 / CBS 112.46 / NRRL 194 / M139) (Aspergillus nidulans).